The following is a 323-amino-acid chain: Methenyltetrahydromethanopterin cyclohydrolase (323 aa).

It belongs to the MCH family.

It localises to the cytoplasm. The enzyme catalyses 5,10-methenyl-5,6,7,8-tetrahydromethanopterin + H2O = N(5)-formyl-5,6,7,8-tetrahydromethanopterin + H(+). It participates in one-carbon metabolism; methanogenesis from CO(2); 5,10-methenyl-5,6,7,8-tetrahydromethanopterin from CO(2): step 3/3. Functionally, catalyzes the reversible interconversion of 5-formyl-H(4)MPT to methenyl-H(4)MPT(+). The sequence is that of Methenyltetrahydromethanopterin cyclohydrolase from Methanobrevibacter smithii (strain ATCC 35061 / DSM 861 / OCM 144 / PS).